Reading from the N-terminus, the 1958-residue chain is Callose synthase 7 (1958 aa).

The interval 1–29 is disordered; it reads MASTSSGGRGEDGRPPQMQPVRSMSRKMT. Topologically, residues 1-504 are cytoplasmic; it reads MASTSSGGRG…LYRSFDRMWM (504 aa). The helical transmembrane segment at 505 to 525 threads the bilayer; the sequence is FLVLSLQTMIIVAWHPSGSIL. Residues 526-535 lie on the Extracellular side of the membrane; that stretch reads AIFTEDVFRN. Residues 536 to 556 traverse the membrane as a helical segment; the sequence is VLTIFITSAFLNLLQATLDLV. Residues 557–569 are Cytoplasmic-facing; the sequence is LSFGAWKSLKFSQ. A helical membrane pass occupies residues 570–590; the sequence is IMRYITKFLMAAMWAIMLPIT. The Extracellular portion of the chain corresponds to 591–620; it reads YSKSVQNPTGLIKFFSSWVGSWLHRSLYDY. Residues 621–641 form a helical membrane-spanning segment; it reads AIALYVLPNILAAVFFLLPPL. Residues 642-673 are Cytoplasmic-facing; it reads RRIMERSNMRIVTLIMWWAQPKLYIGRGMHEE. Residues 674-694 traverse the membrane as a helical segment; sequence MFALFKYTFFWVMLLLSKLAF. The Extracellular portion of the chain corresponds to 695-730; the sequence is SYYVEILPLVNPTKLIWDMHVVNYEWHEFFPNATHN. A helical membrane pass occupies residues 731-751; that stretch reads IGVIIAIWGPIVLVYFMDTQI. At 752-1496 the chain is on the cytoplasmic side; that stretch reads WYAIFSTLFG…FDFYRMLSFY (745 aa). The chain crosses the membrane as a helical span at residues 1497–1517; it reads FTTVGFYFSSMITVLTVYVFL. At 1518–1547 the chain is on the extracellular side; the sequence is YGRLYLVLSGLEKNILQSASVHESNALEQA. A helical membrane pass occupies residues 1548-1568; it reads LAAQSVFQLGFLMVLPMVMEI. The Cytoplasmic segment spans residues 1569–1576; it reads GLEKGFRT. The helical transmembrane segment at 1577-1597 threads the bilayer; the sequence is ALGDFIIMQLQLASVFFTFQL. Residues 1598-1640 lie on the Extracellular side of the membrane; the sequence is GTKAHYFGRTILHGGSKYRATGRGFVVFHAKFAENYRLYSRSH. A helical membrane pass occupies residues 1641–1661; the sequence is FVKGLELVILLVVYQVYGTSY. Topologically, residues 1662–1667 are cytoplasmic; sequence RSSSTY. Residues 1668 to 1688 traverse the membrane as a helical segment; the sequence is MYITFSMWFLVTSWLFAPFIF. Over 1689–1742 the chain is Extracellular; that stretch reads NPSGFEWQKTVDDWTDWKRWMGNRGGIGIVLDKSWESWWDIEQEHLKHTNLRGR. Residues 1743 to 1763 traverse the membrane as a helical segment; that stretch reads VLEILLALRFLLYQYGIVYHL. At 1764–1771 the chain is on the cytoplasmic side; it reads NIARRHTT. The chain crosses the membrane as a helical span at residues 1772–1792; it reads FLVYGLSWAILLSVLLVLKMV. Over 1793–1812 the chain is Extracellular; it reads SMGRRKFGTDFQVMFRILKA. A helical transmembrane segment spans residues 1813–1833; the sequence is LLFLGFLSVMTVLFVVCGLTI. Residues 1834-1835 are Cytoplasmic-facing; sequence SD. A helical membrane pass occupies residues 1836–1856; the sequence is LFASILAFLPTGWAILLIGQA. Topologically, residues 1857-1878 are extracellular; sequence LRSVFKGLGFWDSVKELGRAYE. A helical membrane pass occupies residues 1879 to 1899; sequence YIMGLVIFTPIAVLSWFPFVS. Residues 1900-1958 lie on the Cytoplasmic side of the membrane; the sequence is EFQTRLLFNQAFSRGLQISMILAGKKDKETPSTKYLGHTEESFGLEHDTNTFNHYYLWT.

Belongs to the glycosyltransferase 48 family.

The protein localises to the cell membrane. The enzyme catalyses [(1-&gt;3)-beta-D-glucosyl](n) + UDP-alpha-D-glucose = [(1-&gt;3)-beta-D-glucosyl](n+1) + UDP + H(+). In terms of biological role, involved in callose synthesis at the forming cell plate during cytokinesis. During plant growth and development, callose is found as a transitory component of the cell plate in dividing cells, is a major component of pollen mother cell walls and pollen tubes, and is found as a structural component of plasmodesmatal canals. The polypeptide is Callose synthase 7 (CALS7) (Arabidopsis thaliana (Mouse-ear cress)).